A 389-amino-acid chain; its full sequence is Succinate--CoA ligase [ADP-forming] subunit beta (389 aa).

The ATP-grasp domain maps to 9 to 244; the sequence is KELLRQFNVP…IDEEDAAEIE (236 aa). ATP contacts are provided by residues Lys46, 53 to 55, Glu99, Ala102, and Glu107; that span reads GRG. Residues Asn199 and Asp213 each coordinate Mg(2+). Substrate contacts are provided by residues Asn264 and 321–323; that span reads GIM.

Belongs to the succinate/malate CoA ligase beta subunit family. In terms of assembly, heterotetramer of two alpha and two beta subunits. It depends on Mg(2+) as a cofactor.

The enzyme catalyses succinate + ATP + CoA = succinyl-CoA + ADP + phosphate. The catalysed reaction is GTP + succinate + CoA = succinyl-CoA + GDP + phosphate. Its pathway is carbohydrate metabolism; tricarboxylic acid cycle; succinate from succinyl-CoA (ligase route): step 1/1. Functionally, succinyl-CoA synthetase functions in the citric acid cycle (TCA), coupling the hydrolysis of succinyl-CoA to the synthesis of either ATP or GTP and thus represents the only step of substrate-level phosphorylation in the TCA. The beta subunit provides nucleotide specificity of the enzyme and binds the substrate succinate, while the binding sites for coenzyme A and phosphate are found in the alpha subunit. This Polynucleobacter necessarius subsp. necessarius (strain STIR1) protein is Succinate--CoA ligase [ADP-forming] subunit beta.